Reading from the N-terminus, the 401-residue chain is Exodeoxyribonuclease 7 large subunit (401 aa).

This sequence belongs to the XseA family. In terms of assembly, heterooligomer composed of large and small subunits.

Its subcellular location is the cytoplasm. It catalyses the reaction Exonucleolytic cleavage in either 5'- to 3'- or 3'- to 5'-direction to yield nucleoside 5'-phosphates.. In terms of biological role, bidirectionally degrades single-stranded DNA into large acid-insoluble oligonucleotides, which are then degraded further into small acid-soluble oligonucleotides. In Thermoanaerobacter pseudethanolicus (strain ATCC 33223 / 39E) (Clostridium thermohydrosulfuricum), this protein is Exodeoxyribonuclease 7 large subunit.